The primary structure comprises 242 residues: Phosphatidylethanolamine-binding protein 4 (242 aa).

The first 26 residues, 1-26 (MTMKLVAAALCLSLLAAGLWVGLSLT), serve as a signal peptide directing secretion. Residues 31–50 (EEGKPGGEKPGGGKPGGSGR) form a disordered region. Residues 38 to 50 (EKPGGGKPGGSGR) are compositionally biased toward gly residues. 2 N-linked (GlcNAc...) asparagine glycosylation sites follow: asparagine 77 and asparagine 139. The important for secretion stretch occupies residues 210–242 (DPDTSTQFMTQFDEELSSEFGRINDDQEQFNQK).

This sequence belongs to the phosphatidylethanolamine-binding protein family.

It is found in the secreted. Promotes AKT phosphorylation, suggesting a possible role in the PI3K-AKT signaling pathway. This is Phosphatidylethanolamine-binding protein 4 (Pebp4) from Mus musculus (Mouse).